The sequence spans 399 residues: Phosphoprotein (399 aa).

Composition is skewed to polar residues over residues 30–46 (ATSQSSLNKPPSQSSRT) and 82–112 (GRQNLDSLSMISNKPQTGTLLMGSDTQLPSP). Residues 30–112 (ATSQSSLNKP…MGSDTQLPSP (83 aa)) form a disordered region. Residues 224–287 (NYASEILDAI…ITTMKIMDPG (64 aa)) are multimerization. Positions 226–253 (ASEILDAIKALEVRLDRIEGKVDKIMLT) form a coiled coil.

The protein belongs to the rubulavirus/avulavirus P protein family. Homotetramer. Interacts (via multimerization domain) with polymerase L; this interaction forms the polymerase L-P complex. Interacts (via N-terminus) with N0 (via Ncore); this interaction allows P to chaperon N0 to avoid N polymerization before encapsidation. Interacts (via C-terminus) with N-RNA template; this interaction positions the polymerase on the template for both transcription and replication.

Its function is as follows. Essential cofactor of the RNA polymerase L that plays a central role in the transcription and replication by forming the polymerase complex with RNA polymerase L and recruiting L to the genomic N-RNA template for RNA synthesis. Also plays a central role in the encapsidation of nascent RNA chains by forming the encapsidation complex with the nucleocapsid protein N (N-P complex). Acts as a chaperone for newly synthesized free N protein, so-called N0, allowing encapsidation of nascent RNA chains during replication. The nucleoprotein protein N prevents excessive phosphorylation of P, which leads to down-regulation of viral transcription/ replication. Participates, together with N, in the formation of viral factories (viroplasms), which are large inclusions in the host cytoplasm where replication takes place. This chain is Phosphoprotein (P/V), found in Human parainfluenza 4a virus (strain Toshiba) (HPIV-4a).